The primary structure comprises 131 residues: Large ribosomal subunit protein bL17 (131 aa).

It belongs to the bacterial ribosomal protein bL17 family. In terms of assembly, part of the 50S ribosomal subunit. Contacts protein L32.

The sequence is that of Large ribosomal subunit protein bL17 from Burkholderia mallei (strain NCTC 10229).